Here is a 218-residue protein sequence, read N- to C-terminus: Histone H1 (218 aa).

Residues 1–19 (MSETAPVAAPAVSAPGAKA) are compositionally biased toward low complexity. 2 disordered regions span residues 1–42 (MSET…PSVT) and 89–218 (VSKG…TKKK). N-acetylserine is present on Ser-2. In terms of domain architecture, H15 spans 37-110 (AGPSVTELIT…GASGSFKLNK (74 aa)). 4 stretches are compositionally biased toward basic residues: residues 118 to 133 (KATK…KPAA), 141 to 158 (KKPK…KAKK), 166 to 184 (KAAK…KKTA), and 191 to 218 (KAVK…TKKK).

This sequence belongs to the histone H1/H5 family.

The protein localises to the nucleus. Its subcellular location is the chromosome. In terms of biological role, histones H1 are necessary for the condensation of nucleosome chains into higher-order structures. In Gallus gallus (Chicken), this protein is Histone H1.